The following is a 312-amino-acid chain: Ribose-phosphate pyrophosphokinase (312 aa).

ATP contacts are provided by residues 38–40 (DGE) and 97–98 (RQ). 2 residues coordinate Mg(2+): His131 and Asp170. Lys193 is a catalytic residue. D-ribose 5-phosphate contacts are provided by residues Arg195, Asp219, and 223–227 (DTAGT).

It belongs to the ribose-phosphate pyrophosphokinase family. Class I subfamily. In terms of assembly, homohexamer. Requires Mg(2+) as cofactor.

It localises to the cytoplasm. The catalysed reaction is D-ribose 5-phosphate + ATP = 5-phospho-alpha-D-ribose 1-diphosphate + AMP + H(+). It participates in metabolic intermediate biosynthesis; 5-phospho-alpha-D-ribose 1-diphosphate biosynthesis; 5-phospho-alpha-D-ribose 1-diphosphate from D-ribose 5-phosphate (route I): step 1/1. Functionally, involved in the biosynthesis of the central metabolite phospho-alpha-D-ribosyl-1-pyrophosphate (PRPP) via the transfer of pyrophosphoryl group from ATP to 1-hydroxyl of ribose-5-phosphate (Rib-5-P). In Leptospira interrogans serogroup Icterohaemorrhagiae serovar copenhageni (strain Fiocruz L1-130), this protein is Ribose-phosphate pyrophosphokinase.